A 519-amino-acid chain; its full sequence is Cyclic AMP-responsive element-binding protein 3-like protein 1 (519 aa).

The required for transcription activation stretch occupies residues 1–60 (MDAVLEPFPADRLFPGSSFLDLGDLNESDFLNNAHFPEHLDHFVENMEDFSNDLFSSFFD). Topologically, residues 1-376 (MDAVLEPFPA…MAATQTGTCL (376 aa)) are cytoplasmic. Lysine 184 is covalently cross-linked (Glycyl lysine isopeptide (Lys-Gly) (interchain with G-Cter in SUMO2)). Residues 200–259 (DLVQMPPTPPSSHGSDSDGSQSPRSLPPSSPVRPMARSSTAISTSPLLTAPHKLQGTSGP) form a disordered region. Low complexity predominate over residues 210–223 (SSHGSDSDGSQSPR). Polar residues predominate over residues 236 to 246 (RSSTAISTSPL). A bZIP domain is found at 290–353 (ALKRVRRKIK…RTLLQQLQKL (64 aa)). The tract at residues 292–321 (KRVRRKIKNKISAQESRRKKKEYVECLEKK) is basic motif. The segment at 332-353 (LWKKVETLETANRTLLQQLQKL) is leucine-zipper. A helical; Signal-anchor for type II membrane protein membrane pass occupies residues 377 to 397 (MVAALCFVLVLGSLVPCLPAF). Positions 392 to 395 (PCLP) match the S2P recognition motif. The Lumenal segment spans residues 398–519 (SSGSMTVKED…LGPNTTIKLS (122 aa)). The short motif at 423–426 (RSLL) is the S1P recognition element. A disordered region spans residues 449 to 519 (EGWELKPGGP…LGPNTTIKLS (71 aa)). Over residues 462–486 (RPQDHLRHDRADSIHETTKYLRETW) the composition is skewed to basic and acidic residues. Residues asparagine 493, asparagine 498, and asparagine 513 are each glycosylated (N-linked (GlcNAc...) asparagine).

This sequence belongs to the bZIP family. ATF subfamily. As to quaternary structure, interacts with SMAD4, the interaction takes place upon TGFB1 induction and SMAD4 acts as a CREB3L1 coactivator to induce the expression of genes involved in assembly of collagen extracellular matrix. N-glycosylated. In terms of processing, ubiquitinated by HRD1/SYVN1; undergoes 'Lys-48'-linked ubiquitination, followed by rapid proteasomal degradation under normal conditions. Upon ER stress, SYVN1 E3 ubiquitin-protein ligase dissociates from its substrate, ubiquitination does not occur and CREB3L1 is stabilized. Post-translationally, upon ER stress or DNA damage, translocated to the Golgi apparatus, where it is processed by regulated intramembrane proteolysis (RIP) to release the cytosol-facing N-terminal transcription factor domain. The cleavage is performed sequentially by site-1 and site-2 proteases (S1P/MBTPS1 and S2P/MBTPS2). RIP is induced by TGFB1 and ceramide. Expressed in cortical and trabecular bones. Highly expressed in osteoblasts, but not detected in osteoclasts, nor in macrophages. Expressed at relatively low levels in lung and kidney. Weakly expressed in brain and spleen. Expressed in astrocytes.

The protein localises to the endoplasmic reticulum membrane. The protein resides in the nucleus. Its function is as follows. Precursor of the transcription factor form (Processed cyclic AMP-responsive element-binding protein 3-like protein 1), which is embedded in the endoplasmic reticulum membrane with N-terminal DNA-binding and transcription activation domains oriented toward the cytosolic face of the membrane. In response to ER stress or DNA damage, transported to the Golgi, where it is cleaved in a site-specific manner by resident proteases S1P/MBTPS1 and S2P/MBTPS2. The released N-terminal cytosolic domain is translocated to the nucleus where it activates transcription of specific target genes involved in the cell-cycle progression inhibition. Functionally, transcription factor involved in cell type specific DNA damage and unfolded protein response (UPR). Binds the DNA consensus sequence 5'-GTGXGCXGC-3'. Plays a critical role in bone formation through the transcription of COL1A1, and possibly COL1A2, and the secretion of bone matrix proteins. Directly binds to the UPR element (UPRE)-like sequence in an osteoblast-specific COL1A1 promoter region and induces its transcription. Does not regulate COL1A1 in other tissues, such as skin. Required to protect astrocytes from ER stress-induced cell death. In astrocytes, binds to the cAMP response element (CRE) of the BiP/HSPA5 promoter and participate in its transcriptional activation. In astrocytes and osteoblasts, upon DNA damage, inhibits cell-cycle progression after G2/M phase by binding to promoters and activating transcription of genes encoding cell-cycle inhibitors, such as p21/CDKN1A. Required for TGFB1 to activate genes involved in the assembly of collagen extracellular matrix. The sequence is that of Cyclic AMP-responsive element-binding protein 3-like protein 1 (Creb3l1) from Mus musculus (Mouse).